Here is a 156-residue protein sequence, read N- to C-terminus: tRNA (cytidine(34)-2'-O)-methyltransferase (156 aa).

3 residues coordinate S-adenosyl-L-methionine: glycine 102, leucine 124, and serine 132.

The protein belongs to the class IV-like SAM-binding methyltransferase superfamily. RNA methyltransferase TrmH family. TrmL subfamily. Homodimer.

The protein localises to the cytoplasm. It catalyses the reaction cytidine(34) in tRNA + S-adenosyl-L-methionine = 2'-O-methylcytidine(34) in tRNA + S-adenosyl-L-homocysteine + H(+). The enzyme catalyses 5-carboxymethylaminomethyluridine(34) in tRNA(Leu) + S-adenosyl-L-methionine = 5-carboxymethylaminomethyl-2'-O-methyluridine(34) in tRNA(Leu) + S-adenosyl-L-homocysteine + H(+). In terms of biological role, methylates the ribose at the nucleotide 34 wobble position in the two leucyl isoacceptors tRNA(Leu)(CmAA) and tRNA(Leu)(cmnm5UmAA). Catalyzes the methyl transfer from S-adenosyl-L-methionine to the 2'-OH of the wobble nucleotide. This is tRNA (cytidine(34)-2'-O)-methyltransferase from Burkholderia ambifaria (strain ATCC BAA-244 / DSM 16087 / CCUG 44356 / LMG 19182 / AMMD) (Burkholderia cepacia (strain AMMD)).